A 90-amino-acid polypeptide reads, in one-letter code: Antitoxin epsilon (90 aa).

This sequence belongs to the epsilon antitoxin family. In terms of assembly, in the presence of the zeta toxin, forms an inactive PezA(2)PezT(2) heterotetramer. The heterotetramer is still able to bind the zeta toxin substrate UNAG.

Functionally, antitoxin component of a type II toxin-antitoxin (TA) system. Neutralizes the toxic effect of cognate zeta toxin. Part of a postsegregational killing (PSK) system involved in the killing of plasmid-free cells. Continuous synthesis of the epsilon antitoxin is required to counteract the zeta toxin. The chain is Antitoxin epsilon from Streptococcus pyogenes.